A 306-amino-acid polypeptide reads, in one-letter code: Protein FdhE homolog (306 aa).

The protein belongs to the FdhE family.

It is found in the cytoplasm. Functionally, necessary for formate dehydrogenase activity. The polypeptide is Protein FdhE homolog (Rhizobium meliloti (strain 1021) (Ensifer meliloti)).